A 782-amino-acid polypeptide reads, in one-letter code: Probable cyclic di-GMP phosphodiesterase PdeI (782 aa).

A run of 2 helical transmembrane segments spans residues 12-32 and 286-306; these read LIILFLLAALSFIGLFFIINY and LFYLPFAFIIIVLLVVYLMTT. Residues 527 to 781 form the EAL domain; it reads NIWIARNIRH…AWDKSGKLVK (255 aa).

It localises to the cell membrane. The catalysed reaction is 3',3'-c-di-GMP + H2O = 5'-phosphoguanylyl(3'-&gt;5')guanosine + H(+). In terms of biological role, phosphodiesterase (PDE) that catalyzes the hydrolysis of cyclic-di-GMP (c-di-GMP) to 5'-pGpG. Overexpression reduces biofilm formation. Cyclic-di-GMP is a second messenger which controls cell surface-associated traits in bacteria. The chain is Probable cyclic di-GMP phosphodiesterase PdeI from Escherichia coli (strain K12).